A 724-amino-acid chain; its full sequence is Degenerin mec-10 (724 aa).

Topologically, residues 1 to 125 are cytoplasmic; the sequence is MNRGPPNPRM…GQAPNSLYRA (125 aa). A helical membrane pass occupies residues 126–146; that stretch reads VWVFLLLICAIQFINQAVAVI. Residues 147 to 684 lie on the Extracellular side of the membrane; it reads QKYQKMDKIT…FGGHLGLWSG (538 aa). Asn-294, Asn-370, Asn-463, Asn-605, and Asn-624 each carry an N-linked (GlcNAc...) asparagine glycan. A helical transmembrane segment spans residues 685–705; sequence VSVMTCCEFVCLVLELLYMAV. The Cytoplasmic portion of the chain corresponds to 706-724; the sequence is THHITQERIRRRENAANEF.

The protein belongs to the amiloride-sensitive sodium channel (TC 1.A.6) family. As to quaternary structure, the channel is probably composed of at least the mec-2, mec-4, mec-6 and mec-10 subunits.

The protein localises to the cell membrane. Its function is as follows. Amiloride-sensitive sodium channel subunit required for mechanosensory transduction (touch sensitivity). Negatively regulates the turning step of male mating behavior. In Caenorhabditis briggsae, this protein is Degenerin mec-10.